A 471-amino-acid polypeptide reads, in one-letter code: MAAVATGNVDKLKSDVASLSQISENEKNGFINLVSRYVSGEEAQHVEWSKIQTPTDEVVVPYDGLAPTPEDPEEIKKLLDKLVVLKLNGGLGTTMGCTGPKSVIEVRNGLTFLDLIVIQIENLNNKYGSCVPLLLMNSFNTHDDTQKIVEKYSKSNVQIHTFNQSQYPRLVVEDFSPLPSKGQTGKDGWYPPGHGDVFPSLKNSGKLDLLLSQGKEYVFIANSDNLGAVVDLKILHHLIQKKNEYCMEVTPKTLADVKGGTLISYEGRVQLLEIAQVPDQHVNEFKSIEKFKIFNTNNLWVNLNAIKRLVEADALKMEIIPNPKEVDGVKVLQLETAAGAAIRFFNHAIGINVPRSRFLPVKATSDLLLVQSDLYTLQDGFVTRNSARKNPENPTIELGPEFKKVGSYLSRFKSIPSILELESLKVSGDVWFGAGVVLKGKVTITAKSGVKLEIPDNAVIANKDINGPEDL.

Residues 87–90 (LNGG), lysine 101, glutamine 164, and glycine 193 each bind UTP. Substrate is bound at residue 89–90 (GG). Residues histidine 194 and 222-224 (NSD) contribute to the substrate site. The UTP site is built by aspartate 224 and lysine 362.

It belongs to the UDPGP type 1 family.

Its subcellular location is the cytoplasm. The enzyme catalyses alpha-D-glucose 1-phosphate + UTP + H(+) = UDP-alpha-D-glucose + diphosphate. In terms of biological role, plays a central role as a glucosyl donor in cellular metabolic pathways. This chain is UTP--glucose-1-phosphate uridylyltransferase, found in Pyrus pyrifolia (Chinese pear).